The sequence spans 198 residues: Small ribosomal subunit protein uS2 (198 aa).

This sequence belongs to the universal ribosomal protein uS2 family.

The polypeptide is Small ribosomal subunit protein uS2 (Methanobrevibacter smithii (strain ATCC 35061 / DSM 861 / OCM 144 / PS)).